The primary structure comprises 328 residues: Stress response kinase A (328 aa).

The active-site Proton acceptor is the Asp-201. The Mg(2+) site is built by Asn-206 and Asp-217. Asp-217 is a catalytic residue.

Belongs to the SrkA/RdoA protein kinase family. As to quaternary structure, monomer. The cofactor is Mg(2+).

The protein resides in the cytoplasm. The enzyme catalyses L-seryl-[protein] + ATP = O-phospho-L-seryl-[protein] + ADP + H(+). The catalysed reaction is L-threonyl-[protein] + ATP = O-phospho-L-threonyl-[protein] + ADP + H(+). A protein kinase that phosphorylates Ser and Thr residues. Probably acts to suppress the effects of stress linked to accumulation of reactive oxygen species. Probably involved in the extracytoplasmic stress response. This is Stress response kinase A from Escherichia coli O157:H7.